Consider the following 435-residue polypeptide: GTPase Der (435 aa).

EngA-type G domains lie at 4-167 (PTLA…PSED) and 175-350 (IKFS…ENQT). GTP is bound by residues 10 to 17 (GRPNVGKS), 57 to 61 (DTGGI), 119 to 122 (NKVD), 181 to 188 (GRPNVGKS), 228 to 232 (DTAGI), and 293 to 296 (NKWD). The KH-like domain occupies 351 to 435 (RRIQSSVLND…PIHIIARKRK (85 aa)).

The protein belongs to the TRAFAC class TrmE-Era-EngA-EngB-Septin-like GTPase superfamily. EngA (Der) GTPase family. In terms of assembly, associates with the 50S ribosomal subunit.

Functionally, GTPase that plays an essential role in the late steps of ribosome biogenesis. The protein is GTPase Der of Lacticaseibacillus paracasei (strain ATCC 334 / BCRC 17002 / CCUG 31169 / CIP 107868 / KCTC 3260 / NRRL B-441) (Lactobacillus paracasei).